The chain runs to 1199 residues: Metabotropic glutamate receptor 1 (1199 aa).

The N-terminal stretch at 1–20 (MVRLLLIFFPMIFLEMSILP) is a signal peptide. Residues 21–592 (RMPDRKVLLA…IRYLEWSDIE (572 aa)) lie on the Extracellular side of the membrane. Cys-67 and Cys-109 form a disulfide bridge. An L-glutamate-binding site is contributed by Tyr-74. An N-linked (GlcNAc...) asparagine glycan is attached at Asn-98. Residues Ser-165 and 186-188 (SAT) each bind L-glutamate. A glycan (N-linked (GlcNAc...) asparagine) is linked at Asn-223. An L-glutamate-binding site is contributed by Tyr-236. A disulfide bridge connects residues Cys-289 and Cys-291. Asp-318 contacts L-glutamate. Cys-378 and Cys-394 form a disulfide bridge. Residue Asn-397 is glycosylated (N-linked (GlcNAc...) asparagine). L-glutamate is bound at residue Lys-409. A disulfide bridge connects residues Cys-432 and Cys-439. N-linked (GlcNAc...) asparagine glycosylation occurs at Asn-515. Residues 593 to 615 (SIIAIAFSCLGILVTLFVTLIFV) traverse the membrane as a helical segment. Topologically, residues 616 to 629 (LYRDTPVVKSSSRE) are cytoplasmic. A helical membrane pass occupies residues 630-650 (LCYIILAGIFLGYVCPFTLIA). The Extracellular portion of the chain corresponds to 651–658 (KPTTTSCY). Cys-657 and Cys-746 form a disulfide bridge. Residues 659 to 680 (LQRLLVGLSSAMCYSALVTKTN) form a helical membrane-spanning segment. Over 681–703 (RIARILAGSKKKICTRKPRFMSA) the chain is Cytoplasmic. The chain crosses the membrane as a helical span at residues 704–727 (WAQVIIASILISVQLTLVVTLIIM). The Extracellular portion of the chain corresponds to 728 to 750 (EPPMPILSYPSIKEVYLICNTSN). An N-linked (GlcNAc...) asparagine glycan is attached at Asn-747. The chain crosses the membrane as a helical span at residues 751-772 (LGVVAPVGYNGLLIMSCTYYAF). At 773–785 (KTRNVPANFNEAK) the chain is on the cytoplasmic side. A helical transmembrane segment spans residues 786 to 807 (YIAFTMYTTCIIWLAFVPIYFG). Residues 808–815 (SNYKIITT) are Extracellular-facing. A helical membrane pass occupies residues 816–840 (CFAVSLSVTVALGCMFTPKMYIIIA). Residues 841–1199 (KPERNVRSAF…RDYKQSSSTL (359 aa)) lie on the Cytoplasmic side of the membrane. At Ser-853 the chain carries Phosphoserine. Thr-871 carries the post-translational modification Phosphothreonine. Disordered regions lie at residues 882–906 (GAGN…APKG), 959–1035 (EEDN…QPKS), and 1055–1082 (HAVL…QHLQ). Polar residues predominate over residues 885 to 895 (NANSNGKSVSW). 2 positions are modified to phosphoserine: Ser-894 and Ser-969. A compositionally biased stretch (pro residues) spans 1012 to 1032 (GLPPPLPQQQQQPPPQPPPQQ). Ser-1097 carries the post-translational modification Phosphoserine. Positions 1118-1177 (VYEREGNTEEDDLEEEEDLPAASKLTPEDSPALTPPSPFRDSVASGSSVPSSPVSESVLC) are disordered. Residues 1125-1136 (TEEDDLEEEEDL) show a composition bias toward acidic residues. A Phosphoserine modification is found at Ser-1147. Phosphothreonine is present on Thr-1151. The residue at position 1154 (Ser-1154) is a Phosphoserine. The segment covering 1159 to 1175 (SVASGSSVPSSPVSESV) has biased composition (low complexity).

The protein belongs to the G-protein coupled receptor 3 family. Homodimer; disulfide-linked. The PPXXF motif binds HOMER1, HOMER2 and HOMER3. Interacts with TAMALIN. Interacts with RYR1, RYR2, ITPR1, SHANK1 and SHANK3. Interacts with SHIA1. In terms of tissue distribution, expressed in the striatum (at protein level). Expressed in type II unipolar brush cells of the cerebellum (at protein level).

The protein resides in the cell membrane. It localises to the postsynaptic cell membrane. Its subcellular location is the cell projection. The protein localises to the dendrite. G-protein coupled receptor for glutamate. Ligand binding causes a conformation change that triggers signaling via guanine nucleotide-binding proteins (G proteins) and modulates the activity of down-stream effectors. Signaling activates a phosphatidylinositol-calcium second messenger system. May participate in the central action of glutamate in the CNS, such as long-term potentiation in the hippocampus and long-term depression in the cerebellum (By. similarity). May function in the light response in the retina. Induces GRID1 and GRID2 cation-channel activation via GNAQ-PLC-PKC pathway in dopaminergic neurons and cerebellar Purkinje cell, respectively. The chain is Metabotropic glutamate receptor 1 (Grm1) from Mus musculus (Mouse).